Here is a 976-residue protein sequence, read N- to C-terminus: Protein phosphatase 1 regulatory subunit 12B (976 aa).

Residues 1-24 (MAELEHLGGKRAESARARRAEQLR) show a composition bias toward basic and acidic residues. The tract at residues 1-52 (MAELEHLGGKRAESARARRAEQLRRWRGSLTEQEPAERQGAGRQLQTRRGSP) is disordered. Phosphoserine is present on serine 29. ANK repeat units lie at residues 57-86 (EDGAVFLAACSSGDTDEVKKLLARGADINT), 90-119 (DGLTALHQACIDENLDMVKFLVENRANVNQ), 123-152 (EGWTPLHAAASCGYLNIAEYFISHGASVGI), 216-245 (SGATALHVAAAKGYSEVLRLLIQAGYELNV), and 249-278 (DGWTPLHAAAHWGVKEACSILAEALCDMDI). A disordered region spans residues 342–489 (EEIPKSQDTE…LDDKDKEREN (148 aa)). Residues 362 to 374 (SEEEEGEDEVSES) show a composition bias toward acidic residues. Over residues 375–385 (ETEKEADKKPE) the composition is skewed to basic and acidic residues. Residues 411 to 423 (FSASSARRLSSLF) show a composition bias toward low complexity. At threonine 444 the chain carries Phosphothreonine. Positions 465–477 (SSIYRSSSSPRIS) are enriched in low complexity. A compositionally biased stretch (basic and acidic residues) spans 480–489 (LDDKDKEREN). The residue at position 502 (serine 502) is a Phosphoserine. The tract at residues 503–873 (STSDIEEKEN…LTSRVEEDSN (371 aa)) is disordered. Residues 538–564 (ETPQTIAPSTYTSTYLKRTPYKSQADS) are compositionally biased toward polar residues. Residues 622 to 631 (VRDEEAESLR) show a composition bias toward basic and acidic residues. Basic residues predominate over residues 632-642 (KARSRQARQTR). Threonine 645 carries the post-translational modification Phosphothreonine. A compositionally biased stretch (basic and acidic residues) spans 655–679 (EAEKTFSRSRAERQAQEQPGEKLED). 2 stretches are compositionally biased toward polar residues: residues 722 to 739 (DKPTTPVSPSASRPSLYT) and 747 to 763 (SRASGPDSENSETSTHA). Positions 765–777 (AAKEMDTSEKGEA) are enriched in basic and acidic residues. The span at 791–801 (ERRRAKDRRRG) shows a compositional bias: basic residues. Position 802 is a phosphothreonine (threonine 802). Residues 818–830 (EEVKEALHERLSR) show a composition bias toward basic and acidic residues. A Phosphoserine modification is found at serine 833. The segment covering 844-860 (YSDRASARARREAREAR) has biased composition (basic and acidic residues). Residue serine 941 is modified to Phosphoserine.

In terms of assembly, PP1 comprises a catalytic subunit, PPP1CA, PPP1CB or PPP1CC, and one or several targeting or regulatory subunits. PPP1R12B mediates binding to myosin. Isoform 3 and isoform 4 bind PPP1R12A, but not isoform 1 of PPP1R12B itself. Binds IL16.

Its subcellular location is the cytoplasm. The protein resides in the cytoskeleton. It is found in the stress fiber. In terms of biological role, regulates myosin phosphatase activity. Augments Ca(2+) sensitivity of the contractile apparatus. In Mus musculus (Mouse), this protein is Protein phosphatase 1 regulatory subunit 12B (Ppp1r12b).